We begin with the raw amino-acid sequence, 39 residues long: SDVLELTDDNFESRVSDTGSAGLVEFFAPDATANDVPSP.

The protein belongs to the protein disulfide isomerase family. Part of the major histocompatibility complex class I (MHC I) peptide loading complex composed of TAP1, TAP2, B2M, MHC heavy chain, TAPBP, PDIA3, and CALR. Interacts with ERP27 and CANX. Interacts with SERPINA2 and with SERPINA1. Interacts with ATP2A2. In terms of processing, within the major histocompatibility complex class I (MHC I) peptide loading complex forms reversible disulfide-linked heterodimers with TAPBP as part of its protein folding chaperone activity. This is essential to assist the dynamic assembly of the MHC I complex with high affinity antigens in the endoplasmic reticulum. Phosphorylated. In terms of tissue distribution, predominantly expressed in liver. Low in brain, testis and colon. Not detectable in pancreas and skeletal muscle.

Its subcellular location is the endoplasmic reticulum. The protein localises to the endoplasmic reticulum lumen. It is found in the melanosome. The catalysed reaction is Catalyzes the rearrangement of -S-S- bonds in proteins.. Its function is as follows. Protein disulfide isomerase that catalyzes the formation, isomerization, and reduction or oxidation of disulfide bonds in client proteins and functions as a protein folding chaperone. Core component of the major histocompatibility complex class I (MHC I) peptide loading complex where it functions as an essential folding chaperone for TAPBP. Through TAPBP, assists the dynamic assembly of the MHC I complex with high affinity antigens in the endoplasmic reticulum. Therefore, plays a crucial role in the presentation of antigens to cytotoxic T cells in adaptive immunity. The protein is Protein disulfide-isomerase A3 (PDIA3) of Papio hamadryas (Hamadryas baboon).